The primary structure comprises 313 residues: Putative phosphoribosylaminoimidazole-succinocarboxamide synthase 2 (313 aa).

The protein belongs to the SAICAR synthetase family.

The enzyme catalyses 5-amino-1-(5-phospho-D-ribosyl)imidazole-4-carboxylate + L-aspartate + ATP = (2S)-2-[5-amino-1-(5-phospho-beta-D-ribosyl)imidazole-4-carboxamido]succinate + ADP + phosphate + 2 H(+). Its pathway is purine metabolism; IMP biosynthesis via de novo pathway; 5-amino-1-(5-phospho-D-ribosyl)imidazole-4-carboxamide from 5-amino-1-(5-phospho-D-ribosyl)imidazole-4-carboxylate: step 1/2. In Mesorhizobium japonicum (strain LMG 29417 / CECT 9101 / MAFF 303099) (Mesorhizobium loti (strain MAFF 303099)), this protein is Putative phosphoribosylaminoimidazole-succinocarboxamide synthase 2 (purC2).